We begin with the raw amino-acid sequence, 510 residues long: Nucleosome assembly protein 1-like 3 (510 aa).

Disordered regions lie at residues 1–99 (MAEA…LGTN) and 161–311 (PTEE…KRED). Low complexity predominate over residues 35–74 (SSSSSSSTSGSSSSSSTSGSSSSSGSGSSSSSSGSGSTSS). The span at 161-182 (PTEEECEWNSEDEEFSSDEEVQ) shows a compositional bias: acidic residues. Basic and acidic residues-rich tracts occupy residues 200 to 229 (PKENPEVKAEEKEVPKEIPEVKDEEKEVPK), 235 to 246 (KAEEKADSKDCM), and 254 to 300 (EDPK…VDLK).

The protein belongs to the nucleosome assembly protein (NAP) family.

It is found in the nucleus. This Pongo abelii (Sumatran orangutan) protein is Nucleosome assembly protein 1-like 3 (NAP1L3).